The sequence spans 372 residues: Probable inactive receptor-like protein kinase At1g65250 (372 aa).

ATP-binding positions include 1-4 (MGWL) and Lys-38. The 314-residue stretch at 1-314 (MGWLRKKKKP…QERCQMKAFL (314 aa)) folds into the Protein kinase domain. Tyr-128 and Tyr-221 each carry phosphotyrosine. The segment at 348-372 (SSSLSSGQTQLDSAQDISSTVVLSN) is disordered. Residues 354-372 (GQTQLDSAQDISSTVVLSN) show a composition bias toward polar residues.

The protein belongs to the protein kinase superfamily.

The sequence is that of Probable inactive receptor-like protein kinase At1g65250 from Arabidopsis thaliana (Mouse-ear cress).